Consider the following 490-residue polypeptide: Transmembrane protein 185-like (490 aa).

Residues M1–N31 show a composition bias toward low complexity. Disordered stretches follow at residues M1–K151 and N455–L490. Positions T47–K59 are enriched in polar residues. 2 stretches are compositionally biased toward low complexity: residues S66–S80 and N89–N108. Residues K109–I125 are compositionally biased toward polar residues. The segment covering Q133–N145 has biased composition (gly residues). Acidic residues predominate over residues S463–E472.

Belongs to the TMEM185 family.

This is Transmembrane protein 185-like from Dictyostelium discoideum (Social amoeba).